The following is a 498-amino-acid chain: ATP synthase subunit beta, chloroplastic (498 aa).

Position 172 to 179 (172 to 179 (GGAGVGKT)) interacts with ATP.

The protein belongs to the ATPase alpha/beta chains family. F-type ATPases have 2 components, CF(1) - the catalytic core - and CF(0) - the membrane proton channel. CF(1) has five subunits: alpha(3), beta(3), gamma(1), delta(1), epsilon(1). CF(0) has four main subunits: a(1), b(1), b'(1) and c(9-12).

It localises to the plastid. The protein resides in the chloroplast thylakoid membrane. The enzyme catalyses ATP + H2O + 4 H(+)(in) = ADP + phosphate + 5 H(+)(out). Produces ATP from ADP in the presence of a proton gradient across the membrane. The catalytic sites are hosted primarily by the beta subunits. The chain is ATP synthase subunit beta, chloroplastic from Nymphaea odorata (White water lily).